A 210-amino-acid polypeptide reads, in one-letter code: 23.6 kDa heat shock protein, mitochondrial (210 aa).

The N-terminal 31 residues, 1–31 (MASALALKRLLSSSIAPRSRSVLRPAVSSRL), are a transit peptide targeting the mitochondrion. The region spanning 100-210 (MGASGARRGW…RNDVRQIEIN (111 aa)) is the sHSP domain. Positions 145–165 (GEGKNEEDGGEEGESGNRRFT) are disordered.

It belongs to the small heat shock protein (HSP20) family. In terms of assembly, may form oligomeric structures.

The protein resides in the mitochondrion. In Arabidopsis thaliana (Mouse-ear cress), this protein is 23.6 kDa heat shock protein, mitochondrial (HSP23.6).